Reading from the N-terminus, the 55-residue chain is Large ribosomal subunit protein bL33 (55 aa).

This sequence belongs to the bacterial ribosomal protein bL33 family.

The sequence is that of Large ribosomal subunit protein bL33 from Aeromonas hydrophila subsp. hydrophila (strain ATCC 7966 / DSM 30187 / BCRC 13018 / CCUG 14551 / JCM 1027 / KCTC 2358 / NCIMB 9240 / NCTC 8049).